Consider the following 190-residue polypeptide: NADH-quinone oxidoreductase subunit B (190 aa).

[4Fe-4S] cluster-binding residues include Cys69, Cys70, Cys134, and Cys164.

This sequence belongs to the complex I 20 kDa subunit family. In terms of assembly, NDH-1 is composed of 14 different subunits. Subunits NuoB, C, D, E, F, and G constitute the peripheral sector of the complex. [4Fe-4S] cluster is required as a cofactor.

It is found in the cell inner membrane. It catalyses the reaction a quinone + NADH + 5 H(+)(in) = a quinol + NAD(+) + 4 H(+)(out). Its function is as follows. NDH-1 shuttles electrons from NADH, via FMN and iron-sulfur (Fe-S) centers, to quinones in the respiratory chain. Couples the redox reaction to proton translocation (for every two electrons transferred, four hydrogen ions are translocated across the cytoplasmic membrane), and thus conserves the redox energy in a proton gradient. This chain is NADH-quinone oxidoreductase subunit B, found in Hyphomonas neptunium (strain ATCC 15444).